The primary structure comprises 546 residues: uncharacterized protein (546 aa).

One can recognise an SLH domain in the interval 52–123 (SVAELRDVQP…NTIEQLLQEN (72 aa)).

The protein belongs to the OprB family.

This is an uncharacterized protein from Synechocystis sp. (strain ATCC 27184 / PCC 6803 / Kazusa).